The sequence spans 462 residues: 3-deoxy-D-manno-octulosonic acid transferase (462 aa).

A helical; Signal-anchor transmembrane segment spans residues 2–22 (MLLYYILSFILLPVYFIIIFI). The region spanning 47-90 (SLLDLQMSVNQEGFKVDTEHKATSYVYIHRNASLMYKLSLERSY) is the RPE1 insert domain. E104 serves as the catalytic Proton acceptor. CMP contacts are provided by residues 308 to 309 (PR), 349 to 351 (FGE), and 374 to 377 (NILE).

Belongs to the glycosyltransferase group 1 family.

It is found in the cell inner membrane. The catalysed reaction is lipid IVA (E. coli) + CMP-3-deoxy-beta-D-manno-octulosonate = alpha-Kdo-(2-&gt;6)-lipid IVA (E. coli) + CMP + H(+). It participates in bacterial outer membrane biogenesis; LPS core biosynthesis. Functionally, involved in lipopolysaccharide (LPS) biosynthesis. Catalyzes the transfer of 3-deoxy-D-manno-octulosonate (Kdo) residue(s) from CMP-Kdo to lipid IV(A), the tetraacyldisaccharide-1,4'-bisphosphate precursor of lipid A. The chain is 3-deoxy-D-manno-octulosonic acid transferase (waaA) from Rickettsia typhi (strain ATCC VR-144 / Wilmington).